Reading from the N-terminus, the 555-residue chain is Protein NRT1/ PTR FAMILY 5.4 (555 aa).

A run of 2 helical transmembrane segments spans residues 18–38 and 62–82; these read AALF…GLAS and WIGV…SILG. Position 86 is a phosphothreonine (threonine 86). The next 10 membrane-spanning stretches (helical) occupy residues 87 to 107, 116 to 136, 159 to 179, 187 to 207, 311 to 331, 348 to 368, 392 to 412, 435 to 455, 470 to 490, and 516 to 536; these read VLLT…SVTV, VFFM…PCVM, NYWY…LIFI, LGFS…LIGI, IPIW…NTFF, IPPA…IPLY, IGVG…VEAK, LWLL…IVGM, IGAA…TGII, and YYYW…LFIA.

The protein belongs to the major facilitator superfamily. Proton-dependent oligopeptide transporter (POT/PTR) (TC 2.A.17) family. As to expression, expressed in roots and flowers.

The protein localises to the membrane. This Arabidopsis thaliana (Mouse-ear cress) protein is Protein NRT1/ PTR FAMILY 5.4 (NPF5.4).